A 181-amino-acid chain; its full sequence is MATRIRLQRHGRKSYAFYSIVIADSRAPRDGKFTEKIGTYNPNTNPATVDLNFERALHWVLVGAQPSDTVRNILSREGVYMKKHLLGGVAKGAFGEAEAEAKFEAWKNNKQSGLSALKAKEEEAKKAEAKARLEAEKKVNEVKAKALAEKKAAEEAAKAAAEAPAEEAAPAEETATEAAAE.

The interval 150–181 (KKAAEEAAKAAAEAPAEEAAPAEETATEAAAE) is disordered. The span at 158 to 181 (KAAAEAPAEEAAPAEETATEAAAE) shows a compositional bias: low complexity.

The protein belongs to the bacterial ribosomal protein bS16 family.

The chain is Small ribosomal subunit protein bS16 from Bacteroides fragilis (strain YCH46).